Consider the following 446-residue polypeptide: tRNA-2-methylthio-N(6)-dimethylallyladenosine synthase (446 aa).

The MTTase N-terminal domain maps to 5–121; sequence RRFYIQTFGC…LPSLIDDAAS (117 aa). 6 residues coordinate [4Fe-4S] cluster: C14, C50, C84, C157, C161, and C164. A Radical SAM core domain is found at 143–373; that stretch reads REGRISAFIP…IDLQQEISAE (231 aa). In terms of domain architecture, TRAM spans 376-439; the sequence is RRQVGTVAEV…SATLSGSREG (64 aa).

This sequence belongs to the methylthiotransferase family. MiaB subfamily. As to quaternary structure, monomer. [4Fe-4S] cluster is required as a cofactor.

The protein localises to the cytoplasm. The catalysed reaction is N(6)-dimethylallyladenosine(37) in tRNA + (sulfur carrier)-SH + AH2 + 2 S-adenosyl-L-methionine = 2-methylsulfanyl-N(6)-dimethylallyladenosine(37) in tRNA + (sulfur carrier)-H + 5'-deoxyadenosine + L-methionine + A + S-adenosyl-L-homocysteine + 2 H(+). Functionally, catalyzes the methylthiolation of N6-(dimethylallyl)adenosine (i(6)A), leading to the formation of 2-methylthio-N6-(dimethylallyl)adenosine (ms(2)i(6)A) at position 37 in tRNAs that read codons beginning with uridine. In Chlorobium luteolum (strain DSM 273 / BCRC 81028 / 2530) (Pelodictyon luteolum), this protein is tRNA-2-methylthio-N(6)-dimethylallyladenosine synthase.